Consider the following 149-residue polypeptide: Transcriptional regulator MraZ (149 aa).

SpoVT-AbrB domains follow at residues 7 to 54 and 83 to 126; these read KYVN…GISH and AVQL…QPQN.

It belongs to the MraZ family. In terms of assembly, forms oligomers.

Its subcellular location is the cytoplasm. The protein resides in the nucleoid. The sequence is that of Transcriptional regulator MraZ from Rickettsia felis (strain ATCC VR-1525 / URRWXCal2) (Rickettsia azadi).